An 865-amino-acid polypeptide reads, in one-letter code: Nicotinate catabolism cluster-specific transcription factor (865 aa).

C2H2-type zinc fingers lie at residues 8-32 (HACTYPGCSKAFTRAEHLRRHSLNH) and 41-63 (YTCQRCMTHFSRADLLSRHLDRH). The segment at 74 to 168 (GKGVLETRKR…SIDDDGTDPD (95 aa)) is disordered. The short motif at 77-87 (VLETRKRMRRA) is the Nuclear localization signal(NLS) element. Residues 78 to 89 (LETRKRMRRAED) are compositionally biased toward basic and acidic residues. Positions 96 to 105 (PPKRPSRHQQ) are enriched in basic residues. A compositionally biased stretch (low complexity) spans 108–132 (GPPVGAPLSSSGSVSAGSGRSSRSP). Residues 285-289 (LDIDL) carry the Nuclear export signal (NES) motif.

It is found in the nucleus. Functionally, transcription factor that specifically regulates the expression of the hxn gene cluster that mediates the degradation of nicotinate and related metabolites. This chain is Nicotinate catabolism cluster-specific transcription factor, found in Emericella nidulans (strain FGSC A4 / ATCC 38163 / CBS 112.46 / NRRL 194 / M139) (Aspergillus nidulans).